Reading from the N-terminus, the 421-residue chain is Nuclear envelope integral membrane protein 2 (421 aa).

The first 22 residues, 1 to 22, serve as a signal peptide directing secretion; sequence MPPGSWWLVLWLPPLATLPAGA. 5 consecutive transmembrane segments (helical) span residues 147–167, 175–195, 206–226, 232–252, and 279–299; these read NVVDFRLFLVFATGIFLFFYA, VFYYSSGTVLGILMTLVFVLL, TFGALMIGCWFASVYVLCQLM, LWCGNRIYVLGYVLVVGLCSF, and LVLVYTGMAISQFAYAVMILL.

Belongs to the NEMP family.

The protein resides in the nucleus inner membrane. The chain is Nuclear envelope integral membrane protein 2 (Nemp2) from Rattus norvegicus (Rat).